The chain runs to 370 residues: Chloromuconate cycloisomerase (370 aa).

Residue Lys-165 is the Proton acceptor of the active site. 3 residues coordinate Mn(2+): Asp-194, Glu-220, and Asp-245. Glu-323 acts as the Proton donor in catalysis.

This sequence belongs to the mandelate racemase/muconate lactonizing enzyme family. Mn(2+) serves as cofactor.

It carries out the reaction 2-[(2R)-2-chloro-2,5-dihydro-5-oxofuryl]acetate = 3-chloro-cis,cis-muconate + H(+). The protein operates within aromatic compound metabolism; 3-chlorocatechol degradation. The protein is Chloromuconate cycloisomerase (tfdD) of Delftia acidovorans (Pseudomonas acidovorans).